A 26-amino-acid chain; its full sequence is Dermaseptin-B5 (26 aa).

Position 26 is a valine amide (Val26).

This sequence belongs to the frog skin active peptide (FSAP) family. Dermaseptin subfamily. As to expression, expressed by the skin glands.

Its subcellular location is the secreted. Functionally, possesses a potent antimicrobial activity against Gram-positive and Gram-negative bacteria. Probably acts by disturbing membrane functions with its amphipathic structure. The chain is Dermaseptin-B5 from Phyllomedusa bicolor (Two-colored leaf frog).